The primary structure comprises 475 residues: Ankyrin repeat, SAM and basic leucine zipper domain-containing protein 1 (475 aa).

Residues 1 to 10 (MAAGRLRGLA) are compositionally biased toward low complexity. The tract at residues 1–24 (MAAGRLRGLAVAGGGESSESDDDG) is disordered. Residues Ser17, Ser18, and Ser20 each carry the phosphoserine modification. ANK repeat units lie at residues 45–74 (EKNE…SVDS), 78–107 (YGWT…NANF), 110–144 (DKQT…DPNV), 148–177 (RLMT…EVNT), 181–210 (SGYT…DKML), and 214–243 (DGNI…PLKG). Residues 272-334 (SYTAFGDLEV…KILAALKELD (63 aa)) form the SAM domain.

Interacts with DDX4, PIWIL1, RANBP9 and TDRD1.

It localises to the cytoplasm. Plays a central role during spermatogenesis by repressing transposable elements and preventing their mobilization, which is essential for the germline integrity. Acts via the piRNA metabolic process, which mediates the repression of transposable elements during meiosis by forming complexes composed of piRNAs and Piwi proteins and governs the methylation and subsequent repression of transposons. Its association with pi-bodies suggests a participation in the primary piRNAs metabolic process. Required prior to the pachytene stage to facilitate the production of multiple types of piRNAs, including those associated with repeats involved in the regulation of retrotransposons. May act by mediating protein-protein interactions during germ cell maturation. This is Ankyrin repeat, SAM and basic leucine zipper domain-containing protein 1 (ASZ1) from Carollia perspicillata (Seba's short-tailed bat).